The following is a 128-amino-acid chain: Small ribosomal subunit protein eS8 (128 aa).

This sequence belongs to the eukaryotic ribosomal protein eS8 family. Part of the 30S ribosomal subunit.

This chain is Small ribosomal subunit protein eS8, found in Metallosphaera sedula (strain ATCC 51363 / DSM 5348 / JCM 9185 / NBRC 15509 / TH2).